Reading from the N-terminus, the 621-residue chain is Rab11 family-interacting protein 4A (621 aa).

EF-hand domains are found at residues 14-49 (AFLK…FGQG) and 47-82 (GQGD…IKGC). The Ca(2+) site is built by D27, D29, D31, Y33, H38, D60, N62, R66, and D71. Disordered regions lie at residues 132–172 (YSDE…KEEG) and 203–243 (DYGE…GQTP). Positions 151 to 161 (AADSGAGSESS) are enriched in low complexity. The segment covering 162-172 (EGGRQDDKEEG) has biased composition (basic and acidic residues). Residues 225-243 (TNGFSDLGSSLPSSAGQTP) are compositionally biased toward polar residues. Residues 348 to 556 (DLKSKLKQEN…LNGQILSLSL (209 aa)) adopt a coiled-coil conformation. One can recognise an FIP-RBD domain in the interval 558–620 (EAKNLFACHT…DHNPSILEIK (63 aa)).

As to quaternary structure, homodimer. Forms a complex with Rab11 (rab11a or rab11b) and arf6. As to expression, isoform 1 is predominantly expressed in neural tissues. Isoform B is expressed ubiquitously. In the developing retina, it is expressed in progenitors throughout the retina at early stages and becomes restricted to the ganglion cell layer and ciliary marginal zone as differentiation proceeds.

The protein localises to the recycling endosome membrane. The protein resides in the cleavage furrow. Its subcellular location is the midbody. It localises to the cytoplasmic vesicle. Its function is as follows. Acts as a regulator of endocytic traffic by participating in membrane delivery. Required for the abscission step in cytokinesis, possibly by acting as an 'address tag' delivering recycling endosome membranes to the cleavage furrow during late cytokinesis. May play a role in differentiation during retinal development. The sequence is that of Rab11 family-interacting protein 4A (rab11fip4a) from Danio rerio (Zebrafish).